We begin with the raw amino-acid sequence, 148 residues long: uncharacterized protein (148 aa).

The 62-residue stretch at 4–65 folds into the HTH asnC-type domain; the sequence is MDKVDLQLIK…IPNLEKLNYM (62 aa). The H-T-H motif DNA-binding region spans 23–42; it reads YRELAEMLGTTRQRVARKVD.

This is an uncharacterized protein from Pyrococcus furiosus (strain ATCC 43587 / DSM 3638 / JCM 8422 / Vc1).